Consider the following 898-residue polypeptide: Tight junction protein ZO-3 (898 aa).

The PDZ 1 domain maps to 11-93 (TATLCRDPRR…LANITVKRPR (83 aa)). The tract at residues 98–165 (PATKAGTSGR…SPGGNSEANG (68 aa)) is disordered. Residues S128, S156, S161, S195, and S313 each carry the phosphoserine modification. Residues 187 to 264 (SVLVRRTESE…KLTLLVLRDR (78 aa)) form the PDZ 2 domain. Residues 295–368 (LSQAVPSHVP…QSAEDRGYSP (74 aa)) form a disordered region. The segment covering 312 to 349 (RSLDSDGTDSPRDSPPLRRENSLDSRTISEPDAPRHSS) has biased composition (basic and acidic residues). T319 is subject to Phosphothreonine. 2 positions are modified to phosphoserine: S321 and S360. A PDZ 3 domain is found at 369–435 (DSRVVRFHKG…LTREEAVQFL (67 aa)). The region spanning 464–538 (GDSFYIRTHF…PNQSRAEQLA (75 aa)) is the SH3 domain. One can recognise a Guanylate kinase-like domain in the interval 569-750 (LRRGAKKSTQ…WYQELKAVVR (182 aa)). At S580 the chain carries Phosphoserine. A disordered region spans residues 759-898 (TAEDQLDNSS…GYDWGPATDL (140 aa)). Over residues 762 to 772 (DQLDNSSEDNL) the composition is skewed to acidic residues. Residues 780 to 790 (ADSSADLSCDS) show a composition bias toward low complexity. The segment covering 796 to 814 (YETDGEGYTDGEGYTDVDE) has biased composition (acidic residues). The segment covering 831–841 (EEPRSPRDHGR) has biased composition (basic and acidic residues). Residues S835, S884, and S885 each carry the phosphoserine modification.

The protein belongs to the MAGUK family. In terms of assembly, heterodimer with TJP1. Interacts with UBN1. Interacts with occludin OCLN and claudins. Interacts with PATJ. Interacts with FASLG. Interacts with CCND1. Post-translationally, phosphorylated.

The protein resides in the cell membrane. It is found in the cell junction. It localises to the tight junction. The protein localises to the nucleus. Its function is as follows. TJP1, TJP2, and TJP3 are closely related scaffolding proteins that link tight junction (TJ) transmembrane proteins such as claudins, junctional adhesion molecules, and occludin to the actin cytoskeleton. The tight junction acts to limit movement of substances through the paracellular space and as a boundary between the compositionally distinct apical and basolateral plasma membrane domains of epithelial and endothelial cells. Binds and recruits PATJ to tight junctions where it connects and stabilizes apical and lateral components of tight junctions. Promotes cell-cycle progression through the sequestration of cyclin D1 (CCND1) at tight junctions during mitosis which prevents CCND1 degradation during M-phase and enables S-phase transition. With TJP1 and TJP2, participates in the junctional retention and stability of the transcription factor DBPA, but is not involved in its shuttling to the nucleus. Contrary to TJP2, TJP3 is dispensable for individual viability, embryonic development, epithelial differentiation, and the establishment of TJs, at least in the laboratory environment. The protein is Tight junction protein ZO-3 (TJP3) of Canis lupus familiaris (Dog).